The following is a 143-amino-acid chain: Small ribosomal subunit protein bS6 (143 aa).

Residues 96–143 (VTEASPMAAAKEERRDDRREVKKDVAAAPVEAKEDSVEEKSEEAASEE) are disordered. The span at 105-143 (AKEERRDDRREVKKDVAAAPVEAKEDSVEEKSEEAASEE) shows a compositional bias: basic and acidic residues.

Belongs to the bacterial ribosomal protein bS6 family.

Binds together with bS18 to 16S ribosomal RNA. The sequence is that of Small ribosomal subunit protein bS6 from Colwellia psychrerythraea (strain 34H / ATCC BAA-681) (Vibrio psychroerythus).